The chain runs to 83 residues: Sulfur carrier protein TusA (83 aa).

The active-site Cysteine persulfide intermediate is the cysteine 20.

Belongs to the sulfur carrier protein TusA family.

It localises to the cytoplasm. In terms of biological role, sulfur carrier protein which probably makes part of a sulfur-relay system. The polypeptide is Sulfur carrier protein TusA (Pseudomonas fluorescens (strain SBW25)).